We begin with the raw amino-acid sequence, 161 residues long: Protein-export protein SecB (161 aa).

Belongs to the SecB family. Homotetramer, a dimer of dimers. One homotetramer interacts with 1 SecA dimer.

Its subcellular location is the cytoplasm. Its function is as follows. One of the proteins required for the normal export of preproteins out of the cell cytoplasm. It is a molecular chaperone that binds to a subset of precursor proteins, maintaining them in a translocation-competent state. It also specifically binds to its receptor SecA. The protein is Protein-export protein SecB of Shewanella pealeana (strain ATCC 700345 / ANG-SQ1).